The sequence spans 166 residues: AP-3 complex subunit sigma (166 aa).

This sequence belongs to the adaptor complexes small subunit family. Adaptor protein complex 3 (AP-3) is a heterotetramer composed of two large adaptins (delta-type subunit and beta-type subunit), a medium adaptin (mu-type subunit) and a small adaptin (sigma-type subunit).

It localises to the cytoplasm. The protein localises to the golgi apparatus. Its subcellular location is the cytoplasmic vesicle membrane. In terms of biological role, part of the AP-3 complex, an adaptor-related complex which seems to be clathrin-associated. The complex is associated with the Golgi region as well as more peripheral structures. It facilitates the budding of vesicles from the Golgi membrane and may be directly involved in trafficking to the vacuole. It also function in maintaining the identity of lytic vacuoles and in regulating the transition between storage and lytic vacuoles. The chain is AP-3 complex subunit sigma from Arabidopsis thaliana (Mouse-ear cress).